A 466-amino-acid chain; its full sequence is Glutamate decarboxylase alpha (466 aa).

Substrate contacts are provided by T62 and N83. Pyridoxal 5'-phosphate-binding positions include 126 to 127 (SS), T212, and H275. K276 bears the N6-(pyridoxal phosphate)lysine mark.

It belongs to the group II decarboxylase family. In terms of assembly, homohexamer. Pyridoxal 5'-phosphate serves as cofactor.

It catalyses the reaction L-glutamate + H(+) = 4-aminobutanoate + CO2. In terms of biological role, converts glutamate to gamma-aminobutyrate (GABA), consuming one intracellular proton in the reaction. The gad system helps to maintain a near-neutral intracellular pH when cells are exposed to extremely acidic conditions. The ability to survive transit through the acidic conditions of the stomach is essential for successful colonization of the mammalian host by commensal and pathogenic bacteria. The sequence is that of Glutamate decarboxylase alpha (gadA) from Escherichia coli O6:H1 (strain CFT073 / ATCC 700928 / UPEC).